Here is a 990-residue protein sequence, read N- to C-terminus: Activator of stress genes protein 1 (990 aa).

The disordered stretch occupies residues 1-88; sequence MPKREIEDTQ…NKPKSQENKR (88 aa). The segment covering 9-23 has biased composition (polar residues); that stretch reads TQSPYSSTGLVSTGE. Over residues 24-61 the composition is skewed to low complexity; that stretch reads SPKTSTSTPTSSTNNRAATTTTNNTSTTSTSLLKSNSN. A DNA-binding region (zn(2)-C6 fungal-type) is located at residues 95-121; that stretch reads CDTCRQKKVKCDGKQPCIHCTVYSYKC. Composition is skewed to low complexity over residues 160–179, 282–293, and 773–793; these read NNNSSNQQSLQSLQQQQQHV, SFDDSSNSAVSS, and TATTNSTTTTANTNSNSNSNS. Disordered stretches follow at residues 160 to 192, 255 to 295, 764 to 800, and 915 to 944; these read NNNSSNQQSLQSLQQQQQHVVHQHQHQPLPADE, QDPD…SSPR, RTASRSRQVTATTNSTTTTANTNSNSNSNSQPTTLPA, and SNNNNSNNVNNNFNNNNNAGEVNNNSNGVA.

It belongs to the ASG1 family.

It localises to the nucleus. Transcription factor necessary to sustain growth on non-fermentative carbon sources such as sodium acetate, acetic acid, or ethanol. Plays a role in hyphal formation. The polypeptide is Activator of stress genes protein 1 (ASG1) (Candida albicans (strain SC5314 / ATCC MYA-2876) (Yeast)).